Here is an 868-residue protein sequence, read N- to C-terminus: B-cell receptor CD22 (868 aa).

Positions 1–21 are cleaved as a signal peptide; it reads MRVHYLWLLLILGHVASARYS. Residues 22–148 enclose the Ig-like V-type domain; it reads SANDWTVDHP…MEPIHLNVSE (127 aa). Residues 22–708 lie on the Extracellular side of the membrane; it reads SANDWTVDHP…YYSPETIGKR (687 aa). Cystine bridges form between cysteine 41/cysteine 177, cysteine 46/cysteine 112, and cysteine 171/cysteine 235. N-linked (GlcNAc...) asparagine glycosylation is found at asparagine 111 and asparagine 122. Arginine 130 contributes to the N-acetylneuraminate binding site. Residues asparagine 145, asparagine 174, asparagine 271, asparagine 281, asparagine 384, asparagine 414, asparagine 466, asparagine 567, and asparagine 595 are each glycosylated (N-linked (GlcNAc...) asparagine). 6 Ig-like C2-type domains span residues 153–250, 257–347, 352–435, 440–521, 526–603, and 614–697; these read PYIQ…RTVR, PKLE…VELT, PEPS…AKLD, PKAV…VILN, PRDV…ETLS, and PRRL…STLT. 4 cysteine pairs are disulfide-bonded: cysteine 278/cysteine 330, cysteine 374/cysteine 417, cysteine 463/cysteine 505, and cysteine 550/cysteine 592. Cysteine 637 and cysteine 680 are joined by a disulfide. The helical transmembrane segment at 709–727 threads the bilayer; the sequence is VALGLGFCLTICILAIWGM. At 728–868 the chain is on the cytoplasmic side; the sequence is KIQKKWKQNR…EDVDYVTLKH (141 aa). Polar residues predominate over residues 738 to 752; sequence SQQGLQENSSGQSFF. Positions 738–772 are disordered; the sequence is SQQGLQENSSGQSFFVRNKKARRTPLSEGPQSQGC. 3 positions are modified to phosphoserine: serine 746, serine 747, and serine 750. The short motif at 781-786 is the ITIM motif 1 element; it reads VSYAIL. Tyrosine 783 is modified (phosphotyrosine). The interval 790–812 is disordered; sequence ESDTHNTGDAGTPATQAPPPNNS. Phosphotyrosine occurs at positions 828, 843, and 863. Short sequence motifs (ITIM motif) lie at residues 841–846 and 861–866; these read IHYSEL and VDYVTL.

This sequence belongs to the immunoglobulin superfamily. SIGLEC (sialic acid binding Ig-like lectin) family. In terms of assembly, predominantly monomer of isoform CD22-beta. Also found as heterodimer of isoform CD22-beta and a shorter isoform. Interacts with PTPN6/SHP-1, LYN, SYK, PIK3R1/PIK3R2 and PLCG1 upon phosphorylation. Interacts with GRB2, INPP5D and SHC1 upon phosphorylation. May form a complex with INPP5D/SHIP, GRB2 and SHC1. In terms of processing, phosphorylated on tyrosine residues by LYN. Phosphorylation of Tyr-783 and Tyr-843 are involved in binding to SYK. Phosphorylation of Tyr-828 is involved in binding to GRB2. Phosphorylation of Tyr-863 is involved in binding to SYK, PLCG2 and PIK3R1/PIK3R2. In terms of tissue distribution, B-lymphocytes.

The protein localises to the cell membrane. Its function is as follows. Most highly expressed siglec (sialic acid-binding immunoglobulin-like lectin) on B-cells that plays a role in various aspects of B-cell biology including differentiation, antigen presentation, and trafficking to bone marrow. Binds to alpha 2,6-linked sialic acid residues of surface molecules such as CD22 itself, CD45 and IgM in a cis configuration. Can also bind to ligands on other cells as an adhesion molecule in a trans configuration. Acts as an inhibitory coreceptor on the surface of B-cells and inhibits B-cell receptor induced signaling, characterized by inhibition of the calcium mobilization and cellular activation. Mechanistically, the immunoreceptor tyrosine-based inhibitory motif domain is phosphorylated by the Src kinase LYN, which in turn leads to the recruitment of the protein tyrosine phosphatase 1/PTPN6, leading to the negative regulation of BCR signaling. If this negative signaling from is of sufficient strength, apoptosis of the B-cell can be induced. In Mus musculus (Mouse), this protein is B-cell receptor CD22.